Here is a 501-residue protein sequence, read N- to C-terminus: DDB1- and CUL4-associated factor 12-like protein 1 (501 aa).

Polar residues predominate over residues 1-37 (MRQADSQTQPSPAEQETPQPAGPSNRSPPTMGPQQTG). Residues 1–67 (MRQADSQTQP…PAAPMATAGE (67 aa)) are disordered. WD repeat units follow at residues 185–225 (PPSC…PVCL), 230–268 (GHRD…FNGS), 298–337 (PGNR…SRLL), and 384–423 (SREG…FLEE).

This sequence belongs to the WD repeat DCAF12 family.

The polypeptide is DDB1- and CUL4-associated factor 12-like protein 1 (Dcaf12l1) (Mus musculus (Mouse)).